Here is a 341-residue protein sequence, read N- to C-terminus: Type II methyltransferase M.NgoPII (341 aa).

One can recognise an SAM-dependent MTase C5-type domain in the interval 12–341 (MKIISLFSGC…AAAIKKTLER (330 aa)). C84 is a catalytic residue.

Belongs to the class I-like SAM-binding methyltransferase superfamily. C5-methyltransferase family.

The enzyme catalyses a 2'-deoxycytidine in DNA + S-adenosyl-L-methionine = a 5-methyl-2'-deoxycytidine in DNA + S-adenosyl-L-homocysteine + H(+). A methylase that recognizes the double-stranded sequence 5'-GGCC-3', methylates C-3 on both strands, and protects the DNA from cleavage by the NgoPII endonuclease. The chain is Type II methyltransferase M.NgoPII (ngoPIIM) from Neisseria gonorrhoeae.